A 191-amino-acid chain; its full sequence is Protein Ves (191 aa).

The protein belongs to the Ves family.

The polypeptide is Protein Ves (Escherichia coli O7:K1 (strain IAI39 / ExPEC)).